The chain runs to 299 residues: Pyridoxal 5'-phosphate synthase subunit PdxS (299 aa).

Residue Asp-29 coordinates D-ribose 5-phosphate. Lys-86 serves as the catalytic Schiff-base intermediate with D-ribose 5-phosphate. Residue Gly-158 participates in D-ribose 5-phosphate binding. Arg-170 is a D-glyceraldehyde 3-phosphate binding site. D-ribose 5-phosphate contacts are provided by residues Gly-219 and 240 to 241 (GS).

Belongs to the PdxS/SNZ family. In the presence of PdxT, forms a dodecamer of heterodimers.

The enzyme catalyses aldehydo-D-ribose 5-phosphate + D-glyceraldehyde 3-phosphate + L-glutamine = pyridoxal 5'-phosphate + L-glutamate + phosphate + 3 H2O + H(+). Its pathway is cofactor biosynthesis; pyridoxal 5'-phosphate biosynthesis. Catalyzes the formation of pyridoxal 5'-phosphate from ribose 5-phosphate (RBP), glyceraldehyde 3-phosphate (G3P) and ammonia. The ammonia is provided by the PdxT subunit. Can also use ribulose 5-phosphate and dihydroxyacetone phosphate as substrates, resulting from enzyme-catalyzed isomerization of RBP and G3P, respectively. This Mycobacterium bovis (strain ATCC BAA-935 / AF2122/97) protein is Pyridoxal 5'-phosphate synthase subunit PdxS.